A 287-amino-acid polypeptide reads, in one-letter code: Pyridoxal 5'-phosphate synthase subunit PdxS (287 aa).

A D-ribose 5-phosphate-binding site is contributed by Asp-21. Lys-78 (schiff-base intermediate with D-ribose 5-phosphate) is an active-site residue. Gly-150 provides a ligand contact to D-ribose 5-phosphate. Position 162 (Arg-162) interacts with D-glyceraldehyde 3-phosphate. Residues Gly-211 and 232–233 each bind D-ribose 5-phosphate; that span reads GS.

The protein belongs to the PdxS/SNZ family. As to quaternary structure, in the presence of PdxT, forms a dodecamer of heterodimers.

The enzyme catalyses aldehydo-D-ribose 5-phosphate + D-glyceraldehyde 3-phosphate + L-glutamine = pyridoxal 5'-phosphate + L-glutamate + phosphate + 3 H2O + H(+). It participates in cofactor biosynthesis; pyridoxal 5'-phosphate biosynthesis. Functionally, catalyzes the formation of pyridoxal 5'-phosphate from ribose 5-phosphate (RBP), glyceraldehyde 3-phosphate (G3P) and ammonia. The ammonia is provided by the PdxT subunit. Can also use ribulose 5-phosphate and dihydroxyacetone phosphate as substrates, resulting from enzyme-catalyzed isomerization of RBP and G3P, respectively. This is Pyridoxal 5'-phosphate synthase subunit PdxS from Francisella tularensis subsp. tularensis (strain FSC 198).